Here is a 123-residue protein sequence, read N- to C-terminus: Protein Rev (123 aa).

Residue serine 5 is modified to Phosphoserine; by host CK2. A homomultimerization region spans residues 18–26 (IIKLLYQSS). Residues 25–50 (SSPCPNPRGSRQARKNRRRRWRARQR) are disordered. The Nuclear localization signal and RNA-binding (RRE) signature appears at 34 to 50 (SRQARKNRRRRWRARQR). Over residues 35–49 (RQARKNRRRRWRARQ) the composition is skewed to basic residues. The Nuclear export signal and binding to XPO1 signature appears at 73-84 (LQLPPIERLRLD). The tract at residues 86-123 (SESCGTSGTQQPQGTETGVGGPQISVESSAVLGSGTKN) is disordered. The segment covering 88–101 (SCGTSGTQQPQGTE) has biased composition (polar residues). Position 92 is a phosphoserine; by host (serine 92).

It belongs to the HIV-1 REV protein family. In terms of assembly, homomultimer; when bound to the RRE. Multimeric assembly is essential for activity and may involve XPO1. Binds to human KPNB1, XPO1, TNPO1, RANBP5 and IPO7. Interacts with the viral Integrase. Interacts with human KHDRBS1. Interacts with human NAP1; this interaction decreases Rev multimerization and stimulates its activity. Interacts with human DEAD-box helicases DDX3 and DDX24; these interactions may serve for viral RNA export to the cytoplasm and packaging, respectively. Interacts with human PSIP1; this interaction may inhibit HIV-1 DNA integration by promoting dissociation of the Integrase-LEDGF/p75 complex. Post-translationally, asymmetrically arginine dimethylated at one site by host PRMT6. Methylation impairs the RNA-binding activity and export of viral RNA from the nucleus to the cytoplasm. In terms of processing, phosphorylated by protein kinase CK2. Presence of, and maybe binding to the N-terminus of the regulatory beta subunit of CK2 is necessary for CK2-mediated Rev's phosphorylation.

Its subcellular location is the host nucleus. The protein localises to the host nucleolus. The protein resides in the host cytoplasm. Escorts unspliced or incompletely spliced viral pre-mRNAs (late transcripts) out of the nucleus of infected cells. These pre-mRNAs carry a recognition sequence called Rev responsive element (RRE) located in the env gene, that is not present in fully spliced viral mRNAs (early transcripts). This function is essential since most viral proteins are translated from unspliced or partially spliced pre-mRNAs which cannot exit the nucleus by the pathway used by fully processed cellular mRNAs. Rev itself is translated from a fully spliced mRNA that readily exits the nucleus. Rev's nuclear localization signal (NLS) binds directly to KPNB1/Importin beta-1 without previous binding to KPNA1/Importin alpha-1. KPNB1 binds to the GDP bound form of RAN (Ran-GDP) and targets Rev to the nucleus. In the nucleus, the conversion from Ran-GDP to Ran-GTP dissociates Rev from KPNB1 and allows Rev's binding to the RRE in viral pre-mRNAs. Rev multimerization on the RRE via cooperative assembly exposes its nuclear export signal (NES) to the surface. Rev can then form a complex with XPO1/CRM1 and Ran-GTP, leading to nuclear export of the complex. Conversion from Ran-GTP to Ran-GDP mediates dissociation of the Rev/RRE/XPO1/RAN complex, so that Rev can return to the nucleus for a subsequent round of export. Beside KPNB1, also seems to interact with TNPO1/Transportin-1, RANBP5/IPO5 and IPO7/RANBP7 for nuclear import. The nucleoporin-like HRB/RIP is an essential cofactor that probably indirectly interacts with Rev to release HIV RNAs from the perinuclear region to the cytoplasm. The chain is Protein Rev from Human immunodeficiency virus type 1 group M subtype A (isolate U455) (HIV-1).